The sequence spans 357 residues: Neurogenic differentiation factor 1 (357 aa).

The interval 1–94 (MTKSYSESGL…GPKKKKMTKA (94 aa)) is disordered. A compositionally biased stretch (acidic residues) spans 58-78 (EEEDEDEDLEEEEEEEEEEDD). Positions 81–93 (PKRRGPKKKKMTK) are enriched in basic residues. The Nuclear localization signal motif lies at 87-93 (KKKKMTK). One can recognise a bHLH domain in the interval 101–153 (LRRMKANARERNRMHGLNAALDNLRKVVPCYSKTQKLSKIETLRLAKNYIWAL). S162, S259, S266, and S274 each carry phosphoserine. S336 bears the Phosphoserine; by CaMK2 mark.

Efficient DNA-binding requires dimerization with another bHLH protein. Heterodimer with TCF3/E47; the heterodimer is inhibited in presence of ID2, but not NR0B2, to E-box element. Interacts with EP300; the interaction is inhibited by NR0B2. Interacts with RREB1. Interacts with ATOH8. Post-translationally, phosphorylated by MAPK1; phosphorylation regulates heterodimerization and DNA-binding activities. Phosphorylation on Ser-266 and Ser-274 increases transactivation on the insulin promoter in glucose-stimulated insulinoma cells. Phosphorylated. In islet cells, phosphorylated on Ser-274 upon glucose stimulation; which may be required for nuclear localization. In activated neurons, phosphorylated on Ser-336 by CaMK2; which promotes dendritic growth.

Its subcellular location is the cytoplasm. The protein localises to the nucleus. Functionally, acts as a transcriptional activator: mediates transcriptional activation by binding to E box-containing promoter consensus core sequences 5'-CANNTG-3'. Associates with the p300/CBP transcription coactivator complex to stimulate transcription of the secretin gene as well as the gene encoding the cyclin-dependent kinase inhibitor CDKN1A. Contributes to the regulation of several cell differentiation pathways, like those that promote the formation of early retinal ganglion cells, inner ear sensory neurons, granule cells forming either the cerebellum or the dentate gyrus cell layer of the hippocampus, endocrine islet cells of the pancreas and enteroendocrine cells of the small intestine. Together with PAX6 or SIX3, is required for the regulation of amacrine cell fate specification. Also required for dendrite morphogenesis and maintenance in the cerebellar cortex. Associates with chromatin to enhancer regulatory elements in genes encoding key transcriptional regulators of neurogenesis. In Rattus norvegicus (Rat), this protein is Neurogenic differentiation factor 1 (Neurod1).